The chain runs to 396 residues: NADH-quinone oxidoreductase subunit D 1 (396 aa).

Belongs to the complex I 49 kDa subunit family. As to quaternary structure, NDH-1 is composed of 14 different subunits. Subunits NuoB, C, D, E, F, and G constitute the peripheral sector of the complex.

Its subcellular location is the cell inner membrane. It catalyses the reaction a quinone + NADH + 5 H(+)(in) = a quinol + NAD(+) + 4 H(+)(out). Its function is as follows. NDH-1 shuttles electrons from NADH, via FMN and iron-sulfur (Fe-S) centers, to quinones in the respiratory chain. The immediate electron acceptor for the enzyme in this species is believed to be ubiquinone. Couples the redox reaction to proton translocation (for every two electrons transferred, four hydrogen ions are translocated across the cytoplasmic membrane), and thus conserves the redox energy in a proton gradient. The sequence is that of NADH-quinone oxidoreductase subunit D 1 from Rhizobium etli (strain CIAT 652).